Consider the following 90-residue polypeptide: ATP-dependent Clp protease adapter protein ClpS (90 aa).

This sequence belongs to the ClpS family. Binds to the N-terminal domain of the chaperone ClpA.

In terms of biological role, involved in the modulation of the specificity of the ClpAP-mediated ATP-dependent protein degradation. This is ATP-dependent Clp protease adapter protein ClpS from Helicobacter pylori (strain J99 / ATCC 700824) (Campylobacter pylori J99).